A 442-amino-acid chain; its full sequence is GTPase HflX (442 aa).

Residues 186-362 (VLVALAGYTN…ALNRVVLKLP (177 aa)) enclose the Hflx-type G domain. GTP-binding positions include 192–199 (GYTNAGKS), 217–221 (FTTLD), 238–241 (DTVG), 306–309 (NKID), and 341–343 (SAR). Ser-199 and Thr-219 together coordinate Mg(2+).

The protein belongs to the TRAFAC class OBG-HflX-like GTPase superfamily. HflX GTPase family. In terms of assembly, monomer. Associates with the 50S ribosomal subunit. The cofactor is Mg(2+).

Its subcellular location is the cytoplasm. Its function is as follows. GTPase that associates with the 50S ribosomal subunit and may have a role during protein synthesis or ribosome biogenesis. The sequence is that of GTPase HflX from Thermococcus kodakarensis (strain ATCC BAA-918 / JCM 12380 / KOD1) (Pyrococcus kodakaraensis (strain KOD1)).